The sequence spans 378 residues: tRNA-specific 2-thiouridylase MnmA (378 aa).

Residues 9 to 16 (GVSGGVDS) and methionine 35 contribute to the ATP site. The interaction with target base in tRNA stretch occupies residues 94 to 96 (NPD). The active-site Nucleophile is cysteine 99. A disulfide bridge connects residues cysteine 99 and cysteine 195. Glycine 123 lines the ATP pocket. Residues 145–147 (KDQ) form an interaction with tRNA region. The Cysteine persulfide intermediate role is filled by cysteine 195. Positions 307-308 (RY) are interaction with tRNA.

This sequence belongs to the MnmA/TRMU family.

Its subcellular location is the cytoplasm. The enzyme catalyses S-sulfanyl-L-cysteinyl-[protein] + uridine(34) in tRNA + AH2 + ATP = 2-thiouridine(34) in tRNA + L-cysteinyl-[protein] + A + AMP + diphosphate + H(+). Catalyzes the 2-thiolation of uridine at the wobble position (U34) of tRNA, leading to the formation of s(2)U34. This Xanthomonas oryzae pv. oryzae (strain MAFF 311018) protein is tRNA-specific 2-thiouridylase MnmA.